Consider the following 210-residue polypeptide: Potassium-transporting ATPase KdpC subunit (210 aa).

A helical transmembrane segment spans residues 13–33 (LVTLVLLLVCGLAYPLILTGI).

Belongs to the KdpC family. In terms of assembly, the system is composed of three essential subunits: KdpA, KdpB and KdpC.

Its subcellular location is the cell membrane. In terms of biological role, part of the high-affinity ATP-driven potassium transport (or Kdp) system, which catalyzes the hydrolysis of ATP coupled with the electrogenic transport of potassium into the cytoplasm. This subunit acts as a catalytic chaperone that increases the ATP-binding affinity of the ATP-hydrolyzing subunit KdpB by the formation of a transient KdpB/KdpC/ATP ternary complex. This chain is Potassium-transporting ATPase KdpC subunit, found in Clostridium kluyveri (strain ATCC 8527 / DSM 555 / NBRC 12016 / NCIMB 10680 / K1).